A 375-amino-acid chain; its full sequence is Trichodiene synthase (375 aa).

This sequence belongs to the trichodiene synthase family.

The catalysed reaction is (2E,6E)-farnesyl diphosphate = trichodiene + diphosphate. Its pathway is sesquiterpene biosynthesis; trichothecene biosynthesis. TS is a member of the terpene cyclase group of enzymes. It catalyzes the isomerization and cyclization of farnesyl pyro-phosphate to form trichodiene, the first cyclic intermediate in the biosynthetic pathway for trichothecenes. It serves to branch trichothecene biosynthesis from the isoprenoid pathway. This chain is Trichodiene synthase (TRI5), found in Fusarium asiaticum.